Consider the following 101-residue polypeptide: Precursor of CEP6 (101 aa).

A signal peptide spans 1-26 (MKLSVYIILSILFISTVFYEIQFTEA). Positions 27 to 48 (RQLRKTDDQDHDDHHFTVGYTD) are excised as a propeptide. A compositionally biased stretch (basic and acidic residues) spans 29 to 42 (LRKTDDQDHDDHHF). Residues 29-101 (LRKTDDQDHD…HAVKNNEPNA (73 aa)) are disordered. A hydroxyproline mark is found at Pro52, Pro55, and Pro59. A propeptide spanning residues 64–77 (KMKENEENAGGYKD) is cleaved from the precursor. Basic and acidic residues predominate over residues 64 to 79 (KMKENEENAGGYKDDF). Hydroxyproline is present on residues Pro81, Pro84, and Pro88. Positions 93–101 (AVKNNEPNA) are excised as a propeptide.

Belongs to the C-terminally encoded plant signaling peptide (CEP) family. Interacts with CEP receptors (e.g. CEPR1 and CEPR2). Post-translationally, the mature small signaling peptide is generated by proteolytic processing of the longer precursor. As to expression, expressed in lateral root primordia and in lateral roots excluding the meristem region. Also present in the aerial tissues, such as leaf petioles and the shoot apex region.

Its subcellular location is the secreted. It localises to the extracellular space. The protein localises to the apoplast. Functionally, extracellular signaling peptide that represses primary root growth rate. Modulates leaf morphology. Regulates systemic nitrogen (N)-demand signaling. Mediates up-regulation of genes involved in N uptake and assimilation pathways. The protein is Precursor of CEP6 of Arabidopsis thaliana (Mouse-ear cress).